The primary structure comprises 645 residues: MLQQAQTTSRNTLLDRVDSPKDIRQLTHDDLIILAAEIREKIIDTVSKTGGHLAPSLGVVELTLALHYVFNTPTDKLVWDVGHQSYAHKILTGRRKQFDTLRQYRGMSGFPKRGESDYDAFETGHSSTSISAALGMTLAMDLLQQDNKAIAVIGDGSMTAGMAFEALNHAGHLDKNLIVILNDNEMSISPNVGALSSFLSRKLTGKTMRRVKSHLVEKLQDSDVGENILNVLRKSEESFKSFFTPGMLFEAFKFDYIGPIDGHDIDALISTLNTVRDTAKGPALIHVLTKKGKGYLPAEENPDAFHGVGPFNRQTGKIIKKKGPASYTTVFGQTMLELGKKNKNIVAISAAMVAGTGLTPFSEAYPDRFFDVGIAEQHAITFAAGLASQGMRPVVAIYSSFYQRAMDQIIHDVCIPNLPVTLAIDRAGVVGDDGPTHHGIFDISFLRFIPNLTIMAPKDEAELQQMLVTATGHDGPTAIRYPRGAGEDVSTSQEIESIPILEIGRGELLREGDDILLLPIGNRVYPAMRAAEELAKQGISASVINPRFIKPLDAELICQQAKKTGRIITIEDNTLCSGFGSAVLELLSQKSLYGIKTKILGHPHAFVEHGPQKTLWENSGITSRGIIMAALDLLQKETDPSVANE.

Thiamine diphosphate is bound by residues histidine 83 and 124–126; that span reads GHS. Aspartate 155 lines the Mg(2+) pocket. Thiamine diphosphate-binding positions include 156–157, asparagine 184, tyrosine 295, and glutamate 376; that span reads GS. Residue asparagine 184 participates in Mg(2+) binding.

It belongs to the transketolase family. DXPS subfamily. Homodimer. Mg(2+) serves as cofactor. The cofactor is thiamine diphosphate.

The catalysed reaction is D-glyceraldehyde 3-phosphate + pyruvate + H(+) = 1-deoxy-D-xylulose 5-phosphate + CO2. The protein operates within metabolic intermediate biosynthesis; 1-deoxy-D-xylulose 5-phosphate biosynthesis; 1-deoxy-D-xylulose 5-phosphate from D-glyceraldehyde 3-phosphate and pyruvate: step 1/1. Catalyzes the acyloin condensation reaction between C atoms 2 and 3 of pyruvate and glyceraldehyde 3-phosphate to yield 1-deoxy-D-xylulose-5-phosphate (DXP). This Desulfotalea psychrophila (strain LSv54 / DSM 12343) protein is 1-deoxy-D-xylulose-5-phosphate synthase.